A 717-amino-acid chain; its full sequence is Fatty acid oxidation complex subunit alpha (717 aa).

The interval 1–189 (MIYQSPTIEV…NVGAIDALVA (189 aa)) is enoyl-CoA hydratase/isomerase. Residue D296 coordinates substrate. Positions 311–717 (KKVNSAAVLG…ANNGSYYQQA (407 aa)) are 3-hydroxyacyl-CoA dehydrogenase. NAD(+)-binding positions include M324, D343, 400–402 (VVE), K407, and S429. Catalysis depends on H450, which acts as the For 3-hydroxyacyl-CoA dehydrogenase activity. N453 is an NAD(+) binding site. Residues N500 and Y660 each coordinate substrate.

The protein in the N-terminal section; belongs to the enoyl-CoA hydratase/isomerase family. In the C-terminal section; belongs to the 3-hydroxyacyl-CoA dehydrogenase family. Heterotetramer of two alpha chains (FadB) and two beta chains (FadA).

The enzyme catalyses a (3S)-3-hydroxyacyl-CoA + NAD(+) = a 3-oxoacyl-CoA + NADH + H(+). It carries out the reaction a (3S)-3-hydroxyacyl-CoA = a (2E)-enoyl-CoA + H2O. It catalyses the reaction a 4-saturated-(3S)-3-hydroxyacyl-CoA = a (3E)-enoyl-CoA + H2O. The catalysed reaction is (3S)-3-hydroxybutanoyl-CoA = (3R)-3-hydroxybutanoyl-CoA. The enzyme catalyses a (3Z)-enoyl-CoA = a 4-saturated (2E)-enoyl-CoA. It carries out the reaction a (3E)-enoyl-CoA = a 4-saturated (2E)-enoyl-CoA. Its pathway is lipid metabolism; fatty acid beta-oxidation. Functionally, involved in the aerobic and anaerobic degradation of long-chain fatty acids via beta-oxidation cycle. Catalyzes the formation of 3-oxoacyl-CoA from enoyl-CoA via L-3-hydroxyacyl-CoA. It can also use D-3-hydroxyacyl-CoA and cis-3-enoyl-CoA as substrate. The protein is Fatty acid oxidation complex subunit alpha of Shewanella piezotolerans (strain WP3 / JCM 13877).